The following is a 1222-amino-acid chain: ATP-dependent helicase/nuclease subunit A (1222 aa).

The 457-residue stretch at glutamine 39 to glutamine 495 folds into the UvrD-like helicase ATP-binding domain. Alanine 60–threonine 67 lines the ATP pocket. A UvrD-like helicase C-terminal domain is found at glutamine 524–glycine 810.

The protein belongs to the helicase family. AddA subfamily. In terms of assembly, heterodimer of AddA and AddB/RexB. The cofactor is Mg(2+).

It catalyses the reaction Couples ATP hydrolysis with the unwinding of duplex DNA by translocating in the 3'-5' direction.. It carries out the reaction ATP + H2O = ADP + phosphate + H(+). Its function is as follows. The heterodimer acts as both an ATP-dependent DNA helicase and an ATP-dependent, dual-direction single-stranded exonuclease. Recognizes the chi site generating a DNA molecule suitable for the initiation of homologous recombination. The AddA nuclease domain is required for chi fragment generation; this subunit has the helicase and 3' -&gt; 5' nuclease activities. This is ATP-dependent helicase/nuclease subunit A from Streptococcus pyogenes serotype M18 (strain MGAS8232).